Reading from the N-terminus, the 157-residue chain is Dihydrofolate reductase type 1 (157 aa).

Residues 2 to 156 (KLSLMVAISK…INYSYQIWQK (155 aa)) form the DHFR domain.

Belongs to the dihydrofolate reductase family. As to quaternary structure, homodimer.

The enzyme catalyses (6S)-5,6,7,8-tetrahydrofolate + NADP(+) = 7,8-dihydrofolate + NADPH + H(+). Its pathway is cofactor biosynthesis; tetrahydrofolate biosynthesis; 5,6,7,8-tetrahydrofolate from 7,8-dihydrofolate: step 1/1. Its function is as follows. Key enzyme in folate metabolism. Catalyzes an essential reaction for de novo glycine and purine synthesis, and for DNA precursor synthesis. In Escherichia coli, this protein is Dihydrofolate reductase type 1 (dhfrI).